The sequence spans 482 residues: Ubiquitin carboxyl-terminal hydrolase MINDY-1 (482 aa).

The interval 1–119 is disordered; that stretch reads MEQPQAECPA…RPQQLPQSPR (119 aa). Positions 21-66 are enriched in basic and acidic residues; sequence ESEKHEALSGPEKHPQDKDGADAAPEKHPQDKDGADAHGEAGKQKS. The segment covering 82–94 has biased composition (pro residues); sequence CPPPEASSSPPGP. Polar residues predominate over residues 106 to 119; that stretch reads EACSRPQQLPQSPR. Ser-117 carries the post-translational modification Phosphoserine. Cys-151 serves as the catalytic Nucleophile. The active-site Proton acceptor is the His-333. The segment at 402–441 is ubiquitin-binding domain (UBD); the sequence is QVDQDYLIALSLQQQQQPQGMLGLSDLELAQQLQQEEYQQ. Residues 437 to 446 are compositionally biased toward low complexity; that stretch reads EEYQQQQAVQ. Positions 437–482 are disordered; it reads EEYQQQQAVQPVRTRAPSSPGRGATSGRPAGERRQRSKTESDCVLL. Ser-454 carries the post-translational modification Phosphoserine. Positions 466–482 are enriched in basic and acidic residues; it reads AGERRQRSKTESDCVLL.

This sequence belongs to the MINDY deubiquitinase family. FAM63 subfamily.

The catalysed reaction is Thiol-dependent hydrolysis of ester, thioester, amide, peptide and isopeptide bonds formed by the C-terminal Gly of ubiquitin (a 76-residue protein attached to proteins as an intracellular targeting signal).. Its function is as follows. Hydrolase that can specifically remove 'Lys-48'-linked conjugated ubiquitin from proteins. Has exodeubiquitinase activity and has a preference for long polyubiquitin chains. May play a regulatory role at the level of protein turnover. The polypeptide is Ubiquitin carboxyl-terminal hydrolase MINDY-1 (Mindy1) (Rattus norvegicus (Rat)).